The following is a 160-amino-acid chain: Transcription antitermination protein NusB (160 aa).

It belongs to the NusB family.

Functionally, involved in transcription antitermination. Required for transcription of ribosomal RNA (rRNA) genes. Binds specifically to the boxA antiterminator sequence of the ribosomal RNA (rrn) operons. The sequence is that of Transcription antitermination protein NusB from Salinibacter ruber (strain DSM 13855 / M31).